A 150-amino-acid chain; its full sequence is UPF0098 protein CPn_0877/CP_0992/CPj0877/CpB0906 (150 aa).

This sequence belongs to the UPF0098 family.

In Chlamydia pneumoniae (Chlamydophila pneumoniae), this protein is UPF0098 protein CPn_0877/CP_0992/CPj0877/CpB0906.